The following is a 259-amino-acid chain: Deoxyribose-phosphate aldolase (259 aa).

The active-site Proton donor/acceptor is the D102. K167 (schiff-base intermediate with acetaldehyde) is an active-site residue. K201 serves as the catalytic Proton donor/acceptor.

It belongs to the DeoC/FbaB aldolase family. DeoC type 2 subfamily.

It is found in the cytoplasm. The catalysed reaction is 2-deoxy-D-ribose 5-phosphate = D-glyceraldehyde 3-phosphate + acetaldehyde. It participates in carbohydrate degradation; 2-deoxy-D-ribose 1-phosphate degradation; D-glyceraldehyde 3-phosphate and acetaldehyde from 2-deoxy-alpha-D-ribose 1-phosphate: step 2/2. Its function is as follows. Catalyzes a reversible aldol reaction between acetaldehyde and D-glyceraldehyde 3-phosphate to generate 2-deoxy-D-ribose 5-phosphate. The sequence is that of Deoxyribose-phosphate aldolase from Salmonella dublin (strain CT_02021853).